Consider the following 297-residue polypeptide: Phenylalanine-4-hydroxylase (297 aa).

Fe cation is bound by residues His-138, His-143, and Glu-184.

Belongs to the biopterin-dependent aromatic amino acid hydroxylase family. As to quaternary structure, monomer. It depends on Fe(2+) as a cofactor.

The catalysed reaction is (6R)-L-erythro-5,6,7,8-tetrahydrobiopterin + L-phenylalanine + O2 = (4aS,6R)-4a-hydroxy-L-erythro-5,6,7,8-tetrahydrobiopterin + L-tyrosine. The protein operates within amino-acid degradation; L-phenylalanine degradation; acetoacetate and fumarate from L-phenylalanine: step 1/6. This Chromobacterium violaceum (strain ATCC 12472 / DSM 30191 / JCM 1249 / CCUG 213 / NBRC 12614 / NCIMB 9131 / NCTC 9757 / MK) protein is Phenylalanine-4-hydroxylase (phhA).